Reading from the N-terminus, the 89-residue chain is Transcription elongation factor 1 homolog (89 aa).

4 residues coordinate Zn(2+): cysteine 25, cysteine 28, cysteine 49, and cysteine 52.

Belongs to the ELOF1 family.

Its subcellular location is the nucleus. Functionally, transcription elongation factor implicated in the maintenance of proper chromatin structure in actively transcribed regions. This Oryza sativa subsp. japonica (Rice) protein is Transcription elongation factor 1 homolog.